A 432-amino-acid chain; its full sequence is GTPase HflX (432 aa).

A Hflx-type G domain is found at 202–367 (FTVALVGYTN…ELRRAVGRAM (166 aa)). GTP contacts are provided by residues 208–215 (GYTNAGKS), 233–237 (FATLD), 255–258 (DTVG), 321–324 (NKID), and 345–347 (SAQ). The Mg(2+) site is built by serine 215 and threonine 235.

This sequence belongs to the TRAFAC class OBG-HflX-like GTPase superfamily. HflX GTPase family. Monomer. Associates with the 50S ribosomal subunit. Mg(2+) serves as cofactor.

The protein localises to the cytoplasm. Functionally, GTPase that associates with the 50S ribosomal subunit and may have a role during protein synthesis or ribosome biogenesis. The polypeptide is GTPase HflX (Magnetococcus marinus (strain ATCC BAA-1437 / JCM 17883 / MC-1)).